We begin with the raw amino-acid sequence, 382 residues long: uncharacterized protein (382 aa).

12 helical membrane-spanning segments follow: residues 14–34, 45–65, 75–95, 102–122, 131–151, 157–177, 206–226, 235–255, 270–290, 291–311, 325–345, and 348–368; these read GLLL…LWLA, VVSS…GYVI, YLAS…IGFW, FVAG…LMCS, LLAA…LLVS, LMSV…PLLF, VNGC…MPLF, ASIG…QWPI, VQVF…AMAP, ALFI…AWAC, ALLL…AMLM, and FSDN…LLML.

This sequence belongs to the major facilitator superfamily. YcaD (TC 2.A.1.26) family.

The protein localises to the cell inner membrane. This is an uncharacterized protein from Escherichia coli O17:K52:H18 (strain UMN026 / ExPEC).